A 225-amino-acid polypeptide reads, in one-letter code: Methylthioribulose-1-phosphate dehydratase (225 aa).

The Zn(2+) site is built by His106 and His108.

Belongs to the aldolase class II family. MtnB subfamily. Requires Zn(2+) as cofactor.

It carries out the reaction 5-(methylsulfanyl)-D-ribulose 1-phosphate = 5-methylsulfanyl-2,3-dioxopentyl phosphate + H2O. It participates in amino-acid biosynthesis; L-methionine biosynthesis via salvage pathway; L-methionine from S-methyl-5-thio-alpha-D-ribose 1-phosphate: step 2/6. Catalyzes the dehydration of methylthioribulose-1-phosphate (MTRu-1-P) into 2,3-diketo-5-methylthiopentyl-1-phosphate (DK-MTP-1-P). The sequence is that of Methylthioribulose-1-phosphate dehydratase from Xanthomonas oryzae pv. oryzae (strain KACC10331 / KXO85).